We begin with the raw amino-acid sequence, 341 residues long: NADH-quinone oxidoreductase subunit H 1 (341 aa).

8 consecutive transmembrane segments (helical) span residues Leu13 to Ile33, Gly82 to Ile102, Val115 to Gly135, Ile161 to Val181, Leu190 to Leu210, Tyr248 to Pro268, Trp277 to Met297, and Val317 to Gly337.

It belongs to the complex I subunit 1 family. NDH-1 is composed of 14 different subunits. Subunits NuoA, H, J, K, L, M, N constitute the membrane sector of the complex.

The protein localises to the cell inner membrane. The enzyme catalyses a quinone + NADH + 5 H(+)(in) = a quinol + NAD(+) + 4 H(+)(out). Its function is as follows. NDH-1 shuttles electrons from NADH, via FMN and iron-sulfur (Fe-S) centers, to quinones in the respiratory chain. The immediate electron acceptor for the enzyme in this species is believed to be ubiquinone. Couples the redox reaction to proton translocation (for every two electrons transferred, four hydrogen ions are translocated across the cytoplasmic membrane), and thus conserves the redox energy in a proton gradient. This subunit may bind ubiquinone. The chain is NADH-quinone oxidoreductase subunit H 1 from Rhodopseudomonas palustris (strain BisB18).